Reading from the N-terminus, the 637-residue chain is 1-deoxy-D-xylulose-5-phosphate synthase (637 aa).

Thiamine diphosphate-binding positions include histidine 88 and 129 to 131 (GHS). Aspartate 160 contributes to the Mg(2+) binding site. Residues 161 to 162 (GA), asparagine 189, phenylalanine 293, and glutamate 370 each bind thiamine diphosphate. Residue asparagine 189 participates in Mg(2+) binding.

This sequence belongs to the transketolase family. DXPS subfamily. In terms of assembly, homodimer. The cofactor is Mg(2+). Requires thiamine diphosphate as cofactor.

It catalyses the reaction D-glyceraldehyde 3-phosphate + pyruvate + H(+) = 1-deoxy-D-xylulose 5-phosphate + CO2. The protein operates within metabolic intermediate biosynthesis; 1-deoxy-D-xylulose 5-phosphate biosynthesis; 1-deoxy-D-xylulose 5-phosphate from D-glyceraldehyde 3-phosphate and pyruvate: step 1/1. Functionally, catalyzes the acyloin condensation reaction between C atoms 2 and 3 of pyruvate and glyceraldehyde 3-phosphate to yield 1-deoxy-D-xylulose-5-phosphate (DXP). The chain is 1-deoxy-D-xylulose-5-phosphate synthase from Acinetobacter baumannii (strain AYE).